Here is a 498-residue protein sequence, read N- to C-terminus: Glycerol kinase (498 aa).

Residue T11 participates in ADP binding. ATP-binding residues include T11, T12, and S13. T11 serves as a coordination point for sn-glycerol 3-phosphate. R15 is a binding site for ADP. 4 residues coordinate sn-glycerol 3-phosphate: R81, E82, Y133, and D242. Glycerol-binding residues include R81, E82, Y133, D242, and Q243. Residues T264 and G307 each coordinate ADP. The ATP site is built by T264, G307, Q311, and G411. Residue G411 participates in ADP binding.

The protein belongs to the FGGY kinase family.

The catalysed reaction is glycerol + ATP = sn-glycerol 3-phosphate + ADP + H(+). It participates in polyol metabolism; glycerol degradation via glycerol kinase pathway; sn-glycerol 3-phosphate from glycerol: step 1/1. Inhibited by fructose 1,6-bisphosphate (FBP). In terms of biological role, key enzyme in the regulation of glycerol uptake and metabolism. Catalyzes the phosphorylation of glycerol to yield sn-glycerol 3-phosphate. The sequence is that of Glycerol kinase from Afipia carboxidovorans (strain ATCC 49405 / DSM 1227 / KCTC 32145 / OM5) (Oligotropha carboxidovorans).